Consider the following 728-residue polypeptide: MSNEAKCPFHQAAGNGTSNRDWWPNQLDLSILHRHSSLSDPMGKDFNYAQAFEKLDLAAVKRDLHALMTTSQDWWPADFGHYGGLFIRMAWHSAGTYRTADGRGGAGEGQQRFAPLNSWPDNANLDKARRLLWPIKQKYGRAISWADLLILTGNVALESMGFKTFGFAGGRADTWEPEDVYWGSEKIWLELSGGPNSRYSGDRQLENPLAAVQMGLIYVNPEGPDGNPDPVAAARDIRDTFARMAMNDEETVALIAGGHTFGKTHGAGPASNVGAEPEAAGIEAQGLGWKSAYRTGKGADAITSGLEVTWTTTPTQWSHNFFENLFGYEWELTKSPAGAHQWVAKGADAVIPDAFDPSKKHRPTMLTTDLSLRFDPAYEKISRRFHENPEQFADAFARAWFKLTHRDMGPRARYLGPEVPAEVLLWQDPIPAVDHPLIDAADAAELKAKVLASGLTVSQLVSTAWAAASTFRGSDKRGGANGARIRLAPQKDWEANQPEQLAAVLETLEAIRTAFNGAQRGGKQVSLADLIVLAGCAGVEQAAKNAGHAVTVPFAPGRADASQEQTDVESMAVLEPVADGFRNYLKGKYRVPAEVLLVDKAQLLTLSAPEMTVLLGGLRVLGANVGQSRHGVFTAREQALTNDFFVNLLDMGTEWKPTAADADVFEGRDRATGALKWTGTRVDLVFGSHSQLRALAEVYGSADAQEKFVRDFVAVWNKVMNLDRFDLA.

Positions 91–218 (WHSAGTYRTA…LAAVQMGLIY (128 aa)) form a cross-link, tryptophyl-tyrosyl-methioninium (Trp-Tyr) (with M-244). The active-site Proton acceptor is His-92. Residues 218-244 (YVNPEGPDGNPDPVAAARDIRDTFARM) constitute a cross-link (tryptophyl-tyrosyl-methioninium (Tyr-Met) (with W-91)). Residue His-259 participates in heme b binding.

Belongs to the peroxidase family. Peroxidase/catalase subfamily. Homodimer or homotetramer. Heme b is required as a cofactor. Post-translationally, formation of the three residue Trp-Tyr-Met cross-link is important for the catalase, but not the peroxidase activity of the enzyme.

It carries out the reaction H2O2 + AH2 = A + 2 H2O. It catalyses the reaction 2 H2O2 = O2 + 2 H2O. In terms of biological role, bifunctional enzyme with both catalase and broad-spectrum peroxidase activity. The chain is Catalase-peroxidase from Burkholderia mallei (strain NCTC 10247).